The primary structure comprises 154 residues: uncharacterized protein (154 aa).

Ser47 is modified (phosphoserine).

This sequence to yeast YPL229w.

This is an uncharacterized protein from Saccharomyces cerevisiae (strain ATCC 204508 / S288c) (Baker's yeast).